Here is a 339-residue protein sequence, read N- to C-terminus: Fructose-1,6-bisphosphatase class 1 (339 aa).

4 residues coordinate Mg(2+): E101, D120, L122, and D123. Residues 123–126 (DGSS), N215, and K281 contribute to the substrate site. E287 is a Mg(2+) binding site.

Belongs to the FBPase class 1 family. In terms of assembly, homotetramer. Mg(2+) is required as a cofactor.

The protein localises to the cytoplasm. The enzyme catalyses beta-D-fructose 1,6-bisphosphate + H2O = beta-D-fructose 6-phosphate + phosphate. The protein operates within carbohydrate biosynthesis; gluconeogenesis. This is Fructose-1,6-bisphosphatase class 1 from Polynucleobacter necessarius subsp. necessarius (strain STIR1).